The primary structure comprises 58 residues: Small ribosomal subunit protein bS21 (58 aa).

The tract at residues 36–58 (RHHETPVEKYKRKLQQRRRSRRR) is disordered. Residues 45–58 (YKRKLQQRRRSRRR) show a composition bias toward basic residues.

This sequence belongs to the bacterial ribosomal protein bS21 family.

This is Small ribosomal subunit protein bS21 from Prochlorococcus marinus (strain NATL1A).